We begin with the raw amino-acid sequence, 130 residues long: Small ribosomal subunit protein uS8 (130 aa).

The protein belongs to the universal ribosomal protein uS8 family. Part of the 30S ribosomal subunit. Contacts proteins S5 and S12.

In terms of biological role, one of the primary rRNA binding proteins, it binds directly to 16S rRNA central domain where it helps coordinate assembly of the platform of the 30S subunit. The protein is Small ribosomal subunit protein uS8 of Acidiphilium cryptum (strain JF-5).